We begin with the raw amino-acid sequence, 121 residues long: Large ribosomal subunit protein bL12 (121 aa).

Belongs to the bacterial ribosomal protein bL12 family. In terms of assembly, homodimer. Part of the ribosomal stalk of the 50S ribosomal subunit. Forms a multimeric L10(L12)X complex, where L10 forms an elongated spine to which 2 to 4 L12 dimers bind in a sequential fashion. Binds GTP-bound translation factors.

Its function is as follows. Forms part of the ribosomal stalk which helps the ribosome interact with GTP-bound translation factors. Is thus essential for accurate translation. The chain is Large ribosomal subunit protein bL12 from Xanthomonas euvesicatoria pv. vesicatoria (strain 85-10) (Xanthomonas campestris pv. vesicatoria).